The following is a 297-amino-acid chain: UDP-3-O-acyl-N-acetylglucosamine deacetylase (297 aa).

The Zn(2+) site is built by histidine 79, histidine 238, and aspartate 242. The active-site Proton donor is the histidine 265.

It belongs to the LpxC family. Zn(2+) is required as a cofactor.

The catalysed reaction is a UDP-3-O-[(3R)-3-hydroxyacyl]-N-acetyl-alpha-D-glucosamine + H2O = a UDP-3-O-[(3R)-3-hydroxyacyl]-alpha-D-glucosamine + acetate. Its pathway is glycolipid biosynthesis; lipid IV(A) biosynthesis; lipid IV(A) from (3R)-3-hydroxytetradecanoyl-[acyl-carrier-protein] and UDP-N-acetyl-alpha-D-glucosamine: step 2/6. In terms of biological role, catalyzes the hydrolysis of UDP-3-O-myristoyl-N-acetylglucosamine to form UDP-3-O-myristoylglucosamine and acetate, the committed step in lipid A biosynthesis. This is UDP-3-O-acyl-N-acetylglucosamine deacetylase from Blochmanniella pennsylvanica (strain BPEN).